We begin with the raw amino-acid sequence, 526 residues long: Exodeoxyribonuclease 7 large subunit (526 aa).

Positions 496-526 (GAMTTEGGTPPAGAKKRSAKPADPTKQGSLF) are disordered.

This sequence belongs to the XseA family. In terms of assembly, heterooligomer composed of large and small subunits.

The protein localises to the cytoplasm. It carries out the reaction Exonucleolytic cleavage in either 5'- to 3'- or 3'- to 5'-direction to yield nucleoside 5'-phosphates.. Bidirectionally degrades single-stranded DNA into large acid-insoluble oligonucleotides, which are then degraded further into small acid-soluble oligonucleotides. This Rhizobium etli (strain CIAT 652) protein is Exodeoxyribonuclease 7 large subunit.